A 74-amino-acid chain; its full sequence is Sec-independent protein translocase protein TatA (74 aa).

The helical transmembrane segment at 1–21 (MGGISIWQLLIIVAIVVLLFG) threads the bilayer. Residues 45–74 (EEPKDAEFKSLDKAENTAQTKKEEKEKEQA) form a disordered region.

Belongs to the TatA/E family. In terms of assembly, the Tat system comprises two distinct complexes: a TatABC complex, containing multiple copies of TatA, TatB and TatC subunits, and a separate TatA complex, containing only TatA subunits. Substrates initially bind to the TatABC complex, which probably triggers association of the separate TatA complex to form the active translocon.

It is found in the cell inner membrane. Its function is as follows. Part of the twin-arginine translocation (Tat) system that transports large folded proteins containing a characteristic twin-arginine motif in their signal peptide across membranes. TatA could form the protein-conducting channel of the Tat system. The chain is Sec-independent protein translocase protein TatA from Actinobacillus succinogenes (strain ATCC 55618 / DSM 22257 / CCUG 43843 / 130Z).